The chain runs to 515 residues: Bifunctional purine biosynthesis protein PurH (515 aa).

An MGS-like domain is found at Met-1 to Val-145.

This sequence belongs to the PurH family.

It carries out the reaction (6R)-10-formyltetrahydrofolate + 5-amino-1-(5-phospho-beta-D-ribosyl)imidazole-4-carboxamide = 5-formamido-1-(5-phospho-D-ribosyl)imidazole-4-carboxamide + (6S)-5,6,7,8-tetrahydrofolate. The enzyme catalyses IMP + H2O = 5-formamido-1-(5-phospho-D-ribosyl)imidazole-4-carboxamide. It participates in purine metabolism; IMP biosynthesis via de novo pathway; 5-formamido-1-(5-phospho-D-ribosyl)imidazole-4-carboxamide from 5-amino-1-(5-phospho-D-ribosyl)imidazole-4-carboxamide (10-formyl THF route): step 1/1. The protein operates within purine metabolism; IMP biosynthesis via de novo pathway; IMP from 5-formamido-1-(5-phospho-D-ribosyl)imidazole-4-carboxamide: step 1/1. The polypeptide is Bifunctional purine biosynthesis protein PurH (Streptococcus mutans serotype c (strain ATCC 700610 / UA159)).